The chain runs to 93 residues: MDKFVTHLGKIMPLRRSDVDTDQIIPAVYLKRVTRTGFEDGLFSAWREDPGFVLHNPAHAGATILVAGPNFGTGSSRQHAVWALRDWGFKVVI.

It belongs to the LeuD family. LeuD type 1 subfamily. In terms of assembly, heterodimer of LeuC and LeuD.

It catalyses the reaction (2R,3S)-3-isopropylmalate = (2S)-2-isopropylmalate. It participates in amino-acid biosynthesis; L-leucine biosynthesis; L-leucine from 3-methyl-2-oxobutanoate: step 2/4. Catalyzes the isomerization between 2-isopropylmalate and 3-isopropylmalate, via the formation of 2-isopropylmaleate. The chain is 3-isopropylmalate dehydratase small subunit (leuD) from Actinoplanes teichomyceticus.